We begin with the raw amino-acid sequence, 525 residues long: GMP synthase [glutamine-hydrolyzing] (525 aa).

A Glutamine amidotransferase type-1 domain is found at 9 to 207 (RVLILDFGSQ…VLEIAGCEPL (199 aa)). Cys-86 functions as the Nucleophile in the catalytic mechanism. Active-site residues include His-181 and Glu-183. Residues 208 to 400 (WTPANIVEDA…LGLPYDMVYR (193 aa)) form the GMPS ATP-PPase domain. Position 235 to 241 (235 to 241 (SGGVDSS)) interacts with ATP.

In terms of assembly, homodimer.

It catalyses the reaction XMP + L-glutamine + ATP + H2O = GMP + L-glutamate + AMP + diphosphate + 2 H(+). Its pathway is purine metabolism; GMP biosynthesis; GMP from XMP (L-Gln route): step 1/1. Its function is as follows. Catalyzes the synthesis of GMP from XMP. The sequence is that of GMP synthase [glutamine-hydrolyzing] from Teredinibacter turnerae (strain ATCC 39867 / T7901).